A 230-amino-acid chain; its full sequence is Large ribosomal subunit protein uL1 (230 aa).

The protein belongs to the universal ribosomal protein uL1 family. Part of the 50S ribosomal subunit.

In terms of biological role, binds directly to 23S rRNA. The L1 stalk is quite mobile in the ribosome, and is involved in E site tRNA release. Functionally, protein L1 is also a translational repressor protein, it controls the translation of the L11 operon by binding to its mRNA. The sequence is that of Large ribosomal subunit protein uL1 from Bradyrhizobium diazoefficiens (strain JCM 10833 / BCRC 13528 / IAM 13628 / NBRC 14792 / USDA 110).